Reading from the N-terminus, the 149-residue chain is Nucleoside diphosphate kinase (149 aa).

Positions 9, 57, 85, 91, 102, and 112 each coordinate ATP. Residue His-115 is the Pros-phosphohistidine intermediate of the active site.

Belongs to the NDK family. As to quaternary structure, homotetramer. Requires Mg(2+) as cofactor.

It localises to the cytoplasm. The enzyme catalyses dZDP + ATP = dZTP + ADP. The catalysed reaction is a 2'-deoxyribonucleoside 5'-diphosphate + ATP = a 2'-deoxyribonucleoside 5'-triphosphate + ADP. It catalyses the reaction a ribonucleoside 5'-diphosphate + ATP = a ribonucleoside 5'-triphosphate + ADP. It functions in the pathway purine metabolism. Functionally, major role in the synthesis of nucleoside triphosphates other than ATP. The ATP gamma phosphate is transferred to the NDP beta phosphate via a ping-pong mechanism, using a phosphorylated active-site intermediate. In terms of biological role, (Microbial infection) Catalyzes the phosphorylation of dZDP to dZTP, when the bacterium is infected by a phage that produces the substrate for the synthesis of dZTP (2- amino-2'-deoxyadenosine 5'-triphosphate), which is then used by the phage as a DNA polymerase substrate. The chain is Nucleoside diphosphate kinase from Synechococcus sp. (strain JA-3-3Ab) (Cyanobacteria bacterium Yellowstone A-Prime).